The following is a 376-amino-acid chain: Riboflavin biosynthesis protein RibD (376 aa).

A deaminase region spans residues 1–150 (MEDFSEQQLF…QPYLYQRTHN (150 aa)). The CMP/dCMP-type deaminase domain occupies 6–128 (EQQLFFMRRA…MLRQAGIQVY (123 aa)). Histidine 55 contacts Zn(2+). The active-site Proton donor is the glutamate 57. Zn(2+) is bound by residues cysteine 80 and cysteine 89. Residues 151–376 (FPWTILKSAA…SPQVFEPIRN (226 aa)) are reductase. Residue alanine 159 participates in NADP(+) binding. Residue serine 173 participates in substrate binding. Residue tryptophan 175 coordinates NADP(+). Residue arginine 189 participates in substrate binding. 2 residues coordinate NADP(+): threonine 201 and aspartate 205. Leucine 209 and arginine 212 together coordinate substrate. Serine 230 contributes to the NADP(+) binding site. Glutamate 300 contacts substrate. 302 to 308 (GTTLHTS) lines the NADP(+) pocket.

The protein in the N-terminal section; belongs to the cytidine and deoxycytidylate deaminase family. It in the C-terminal section; belongs to the HTP reductase family. Requires Zn(2+) as cofactor.

It carries out the reaction 2,5-diamino-6-hydroxy-4-(5-phosphoribosylamino)-pyrimidine + H2O + H(+) = 5-amino-6-(5-phospho-D-ribosylamino)uracil + NH4(+). It catalyses the reaction 5-amino-6-(5-phospho-D-ribitylamino)uracil + NADP(+) = 5-amino-6-(5-phospho-D-ribosylamino)uracil + NADPH + H(+). Its pathway is cofactor biosynthesis; riboflavin biosynthesis; 5-amino-6-(D-ribitylamino)uracil from GTP: step 2/4. It functions in the pathway cofactor biosynthesis; riboflavin biosynthesis; 5-amino-6-(D-ribitylamino)uracil from GTP: step 3/4. In terms of biological role, converts 2,5-diamino-6-(ribosylamino)-4(3h)-pyrimidinone 5'-phosphate into 5-amino-6-(ribosylamino)-2,4(1h,3h)-pyrimidinedione 5'-phosphate. The polypeptide is Riboflavin biosynthesis protein RibD (ribD) (Chlamydia pneumoniae (Chlamydophila pneumoniae)).